We begin with the raw amino-acid sequence, 500 residues long: NAD(P)H-quinone oxidoreductase chain 4, chloroplastic (500 aa).

The next 15 membrane-spanning stretches (helical) occupy residues 4–24 (FPWL…LFFF), 37–57 (ICIC…HFEL), 87–107 (IGPI…AWPV), 113–130 (LFYF…GSFS), 134–154 (LLLF…LLSM), 167–187 (FILY…GIGL), 207–227 (IALE…KSPI), 242–262 (HYST…YGLV), 272–292 (AHSI…IYAA), 305–325 (IAYS…SISD), 330–350 (GAIL…FLAG), 364–384 (MGGL…LSMA), 386–406 (LALP…GIIT), 417–437 (VITL…LSML), and 463–483 (FVAI…DFVF).

This sequence belongs to the complex I subunit 4 family.

It is found in the plastid. The protein localises to the chloroplast thylakoid membrane. The catalysed reaction is a plastoquinone + NADH + (n+1) H(+)(in) = a plastoquinol + NAD(+) + n H(+)(out). The enzyme catalyses a plastoquinone + NADPH + (n+1) H(+)(in) = a plastoquinol + NADP(+) + n H(+)(out). The sequence is that of NAD(P)H-quinone oxidoreductase chain 4, chloroplastic from Cucumis sativus (Cucumber).